Reading from the N-terminus, the 331-residue chain is Type 2 lactosamine alpha-2,3-sialyltransferase (331 aa).

Topologically, residues 1–4 (MRGY) are cytoplasmic. The chain crosses the membrane as a helical; Signal-anchor for type II membrane protein span at residues 5-25 (LVAIFLSAVFLYYVLHCILWG). Residues 26–331 (TNVYWAAPVE…KNLVINLTQD (306 aa)) are Lumenal-facing. 6 N-linked (GlcNAc...) asparagine glycosylation sites follow: Asn129, Asn181, Asn282, Asn295, Asn308, and Asn327.

This sequence belongs to the glycosyltransferase 29 family.

It localises to the golgi apparatus membrane. The enzyme catalyses a neolactoside nLc4Cer(d18:1(4E)) + CMP-N-acetyl-beta-neuraminate = a neolactoside IV(3)-alpha-NeuAc-nLc4Cer(d18:1(4E)) + CMP + H(+). The catalysed reaction is a beta-D-galactosyl-(1-&gt;4)-N-acetyl-beta-D-glucosaminyl derivative + CMP-N-acetyl-beta-neuraminate = an N-acetyl-alpha-neuraminyl-(2-&gt;3)-beta-D-galactosyl-(1-&gt;4)-N-acetyl-beta-D-glucosaminyl derivative + CMP + H(+). It carries out the reaction a neolactoside nLc6Cer(d18:1(4E)) + CMP-N-acetyl-beta-neuraminate = a neolactoside VI(3)-alpha-NeuNAc-nLc6Cer(d18:1(4E)) + CMP + H(+). Functionally, transfers the sialyl residue from CMP-N-acetyl-beta-neuraminate to the terminal galactose residue on sugar chains of glycoproteins and glycolipids. It's alpha-2,3-sialyltransferase activity is specific toward type II glycan chains (Galbeta1-4GlcNAc) on glycoproteins and glycolipids such as neolactosides nLc4Cer and nLc6Cer, whose sialyl-products serve as precursors for the Lewis X antigen. Critically involved in the synthesis of functional selectin ligands needed for neutrophil recruitment during inflammation and lymphocyte homing to the lymph nodes. This chain is Type 2 lactosamine alpha-2,3-sialyltransferase (ST3GAL6), found in Pongo abelii (Sumatran orangutan).